An 889-amino-acid chain; its full sequence is Low-affinity potassium transport protein (889 aa).

Over 1-51 the chain is Cytoplasmic; sequence MPTAKRTSSRASLALPFQLRLVHKKSWGHRLRDFISGFLKSCRPIAKYVFP. Residues 52–73 form a helical membrane-spanning segment; sequence NFIVVHYIYLITLSIIGSILLY. Topologically, residues 74–80 are extracellular; that stretch reads PCKNTAF. The chain crosses the membrane as a helical span at residues 81 to 101; that stretch reads IDVLFLAAGASTQGGLATKST. The Cytoplasmic portion of the chain corresponds to 102-109; it reads NDFNLYQQ. Residues 110–130 traverse the membrane as a helical segment; sequence IVVYVITLLSTPILIHGFLAF. Topologically, residues 131-464 are extracellular; sequence VRLYWFERYF…EYRALRLLCC (334 aa). The segment at 189-244 is disordered; the sequence is REDPRQSASDVPMDSPDTSALSSISPLNVSSSKEESSDTQSSPPNFSSKRQPSDVD. The segment covering 207–219 has biased composition (low complexity); that stretch reads SALSSISPLNVSS. N-linked (GlcNAc...) asparagine glycans are attached at residues Asn-216, Asn-233, and Asn-265. The chain crosses the membrane as a helical span at residues 465–487; it reads ILMVYYIGFNILAFVTIVPWACT. At 488–499 the chain is on the cytoplasmic side; sequence RHHYSEIIRRNG. A helical membrane pass occupies residues 500-521; the sequence is VSPTWWGFFTAMSAFSNLGLSL. Topologically, residues 522–524 are extracellular; that stretch reads TAD. Residues 525-545 traverse the membrane as a helical segment; sequence SMVSFDTAPYPLIFMMFFIII. Residues 546-548 are Cytoplasmic-facing; the sequence is GNT. A helical transmembrane segment spans residues 549 to 569; that stretch reads GFPIMLRFIIWIMFKTSRDLS. Residues 570-584 lie on the Extracellular side of the membrane; sequence QFKESLGFLLDHPRR. Residues 585–605 traverse the membrane as a helical segment; that stretch reads CFTLLFPSGPTWWLFTTLVVL. At 606–609 the chain is on the cytoplasmic side; the sequence is NATD. Residues 610 to 630 form a helical membrane-spanning segment; that stretch reads WILFIILDFNSAVVRQVAKGY. The Extracellular segment spans residues 631–657; that stretch reads RALMGLFQSVCTRTAGFNVVDLSKLHP. A helical membrane pass occupies residues 658-678; it reads SIQVSYMLMMYVSVLPLAISI. At 679–743 the chain is on the cytoplasmic side; it reads RRTNVYEEQS…KSFVGAHLRR (65 aa). The disordered stretch occupies residues 705 to 733; the sequence is DDIKETDHDGESEERDTVSTKSKPKKQSP. A helical transmembrane segment spans residues 744–764; that stretch reads QLSFDLWYLFLGLFIICICEG. The Extracellular segment spans residues 765–776; it reads RKIEDVNKPDFN. Residues 777 to 797 traverse the membrane as a helical segment; sequence VFAILFEVVSAYGTVGLSLGY. Topologically, residues 798–889 are cytoplasmic; it reads PNTNTSLSAQ…KIATKFWGKH (92 aa).

It belongs to the TrkH potassium transport family.

The protein resides in the membrane. This protein is required for low-affinity potassium transport. This is Low-affinity potassium transport protein (TRK2) from Saccharomyces cerevisiae (strain ATCC 204508 / S288c) (Baker's yeast).